The sequence spans 843 residues: Elongation factor 2 (843 aa).

Positions 17–253 constitute a tr-type G domain; that stretch reads HNIRNMSVIA…LWGENFFDPA (237 aa). Residue 26–33 participates in GTP binding; that stretch reads AHVDHGKS. Thr57 and Thr59 each carry phosphothreonine. Residue 158 to 161 coordinates GTP; that stretch reads NKMD. Position 700 is a diphthamide (His700).

This sequence belongs to the TRAFAC class translation factor GTPase superfamily. Classic translation factor GTPase family. EF-G/EF-2 subfamily. In terms of processing, phosphorylation by EF-2 kinase completely inactivates EF-2.

Its subcellular location is the cytoplasm. It catalyses the reaction GTP + H2O = GDP + phosphate + H(+). Its function is as follows. Catalyzes the GTP-dependent ribosomal translocation step during translation elongation. During this step, the ribosome changes from the pre-translocational (PRE) to the post-translocational (POST) state as the newly formed A-site-bound peptidyl-tRNA and P-site-bound deacylated tRNA move to the P and E sites, respectively. Catalyzes the coordinated movement of the two tRNA molecules, the mRNA and conformational changes in the ribosome. The sequence is that of Elongation factor 2 from Beta vulgaris (Sugar beet).